We begin with the raw amino-acid sequence, 36 residues long: MAASLLPSIFVPLVGLVFPAVAMASLFLYIEKEQVS.

A helical membrane pass occupies residues 9–29 (IFVPLVGLVFPAVAMASLFLY).

The protein belongs to the PsaI family.

It localises to the plastid. The protein resides in the chloroplast thylakoid membrane. Functionally, may help in the organization of the PsaL subunit. This Ostreococcus tauri protein is Photosystem I reaction center subunit VIII.